The primary structure comprises 508 residues: Cytochrome P450 monooxygenase BipB (508 aa).

The helical transmembrane segment at 11 to 31 (ELAWLLLGPLVLFYVFKLFIY) threads the bilayer. Heme is bound at residue Cys-448.

It belongs to the cytochrome P450 family. Requires heme as cofactor.

Its subcellular location is the membrane. Its pathway is sesquiterpene biosynthesis. Functionally, cytochrome P450 monooxygenase; part of the minimal biosynthetic bip cluster that mediates the biosynthesis of bridged polycyclic sesquiterpenoids derived from sativene, isosativene, and longifolene. The sesquiterpene cyclase BipA acts as a versatile cyclase that converts farnesyl diphosphate (FPP) into (-)-sativene as the dominant product and (-)-isosativene and (-)-longifolene as minor ones. The cytochrome P450 monooxygenase BipB then hydroxylates different enantiomeric sesquiterpenes, such as (-)-longifolene and (+)-longifolene, at C-15 and C-14. The C-15- or both C-15- and C-14-hydroxylated products are further oxidized by unclustered oxidases, resulting in a structurally diverse array of sesquiterpenoids. The BipB-catalyzed hydroxylation at C-15 serves as an initiator for the oxidation by the unclustered oxidases. This chain is Cytochrome P450 monooxygenase BipB, found in Cochliobolus sativus (Common root rot and spot blotch fungus).